A 277-amino-acid polypeptide reads, in one-letter code: MEMO1 family protein TRQ2_0860 (277 aa).

Belongs to the MEMO1 family.

This is MEMO1 family protein TRQ2_0860 from Thermotoga sp. (strain RQ2).